A 214-amino-acid chain; its full sequence is Probable GTP-binding protein EngB (214 aa).

The EngB-type G domain maps to 40-212 (SLPEIVFVGK…KASFAQCIKH (173 aa)). GTP is bound by residues 48–55 (GKSNVGKS), 75–79 (GRTRQ), 93–96 (DLPG), 160–163 (TKSD), and 191–193 (VSS). Mg(2+) contacts are provided by S55 and T77.

Belongs to the TRAFAC class TrmE-Era-EngA-EngB-Septin-like GTPase superfamily. EngB GTPase family. It depends on Mg(2+) as a cofactor.

In terms of biological role, necessary for normal cell division and for the maintenance of normal septation. The chain is Probable GTP-binding protein EngB from Rickettsia prowazekii (strain Madrid E).